Reading from the N-terminus, the 139-residue chain is 3-hydroxyacyl-[acyl-carrier-protein] dehydratase FabZ (139 aa).

Histidine 46 is a catalytic residue.

The protein belongs to the thioester dehydratase family. FabZ subfamily.

The protein resides in the cytoplasm. The catalysed reaction is a (3R)-hydroxyacyl-[ACP] = a (2E)-enoyl-[ACP] + H2O. Involved in unsaturated fatty acids biosynthesis. Catalyzes the dehydration of short chain beta-hydroxyacyl-ACPs and long chain saturated and unsaturated beta-hydroxyacyl-ACPs. The protein is 3-hydroxyacyl-[acyl-carrier-protein] dehydratase FabZ of Streptococcus pyogenes serotype M3 (strain ATCC BAA-595 / MGAS315).